The following is a 396-amino-acid chain: Sialyltransferase-like protein 2 (396 aa).

Topologically, residues 1–6 (MKRRHL) are cytoplasmic. The chain crosses the membrane as a helical; Signal-anchor for type II membrane protein span at residues 7-23 (PPVLVLLLLSILSLSFR). At 24 to 396 (RRLLVLQGPP…FTVPPVRLHR (373 aa)) the chain is on the lumenal side. N-linked (GlcNAc...) asparagine glycans are attached at residues N72, N260, and N304.

It belongs to the glycosyltransferase 29 family.

It localises to the golgi apparatus membrane. In terms of biological role, does not possess sialyltransferase-like activity in vitro. The protein is Sialyltransferase-like protein 2 of Oryza sativa subsp. indica (Rice).